We begin with the raw amino-acid sequence, 474 residues long: Polyamine oxidase 7 (474 aa).

A signal peptide spans 1-27; it reads MTKPTTMAIFLSIVLLSMAQLPSLVAG. The FAD site is built by Glu61 and Arg69. 2 N-linked (GlcNAc...) asparagine glycosylation sites follow: Asn103 and Asn150. Val261 is an FAD binding site. N-linked (GlcNAc...) asparagine glycosylation is present at Asn278. Glu454 serves as a coordination point for FAD.

The protein belongs to the flavin monoamine oxidase family. The cofactor is FAD.

It is found in the secreted. The protein resides in the extracellular space. It localises to the apoplast. The catalysed reaction is spermine + O2 + H2O = 3-aminopropanal + spermidine + H2O2. It carries out the reaction N(1)-acetylspermine + O2 + H2O = 3-acetamidopropanal + spermidine + H2O2. The enzyme catalyses norspermine + O2 + H2O = norspermidine + 3-aminopropanal + H2O2. It catalyses the reaction spermidine + O2 + H2O = 3-aminopropanal + putrescine + H2O2. The catalysed reaction is N(1)-acetylspermidine + O2 + H2O = 3-acetamidopropanal + putrescine + H2O2. It carries out the reaction thermospermine + O2 + H2O = 3-aminopropanal + spermidine + H2O2. It participates in amine and polyamine degradation; spermidine degradation. It functions in the pathway amine and polyamine degradation; spermine degradation. Its function is as follows. Flavoenzyme involved in polyamine back-conversion. Catalyzes the oxidation of the secondary amino group of polyamines, such as spermine, spermidine and their acetyl derivatives. Substrate preference is spermine &gt; spermidine &gt; N(1)-acetylspermine &gt; N(1)-acetylspermidine &gt; norspermine &gt; thermospermine. No activity detected when putrescine is used as substrate. May play a role in producing hydrogen peroxide for secondary wall thickening through lignin formation during anther development. The protein is Polyamine oxidase 7 of Oryza sativa subsp. japonica (Rice).